Here is a 183-residue protein sequence, read N- to C-terminus: Ribosome-recycling factor (183 aa).

This sequence belongs to the RRF family.

The protein resides in the cytoplasm. In terms of biological role, responsible for the release of ribosomes from messenger RNA at the termination of protein biosynthesis. May increase the efficiency of translation by recycling ribosomes from one round of translation to another. This Mycoplasmoides gallisepticum (strain R(low / passage 15 / clone 2)) (Mycoplasma gallisepticum) protein is Ribosome-recycling factor.